Reading from the N-terminus, the 244-residue chain is Cell division protein ZapD (244 aa).

Belongs to the ZapD family. Interacts with FtsZ.

The protein localises to the cytoplasm. Cell division factor that enhances FtsZ-ring assembly. Directly interacts with FtsZ and promotes bundling of FtsZ protofilaments, with a reduction in FtsZ GTPase activity. The sequence is that of Cell division protein ZapD from Shewanella baltica (strain OS185).